Here is a 102-residue protein sequence, read N- to C-terminus: Sulfur globule protein CV3 (102 aa).

The first 25 residues, 1-25 (MTMKRLLLVSTLAGASALATLPANA), serve as a signal peptide directing secretion.

As to quaternary structure, the protein envelope of the sulfur globules is composed of the three different proteins CV1, CV2 and CV3.

In terms of biological role, structural protein of the sulfur globules, which are intracellular globules that serve for sulfur storage in purple sulfur bacteria. The sequence is that of Sulfur globule protein CV3 (sgpC) from Allochromatium vinosum (strain ATCC 17899 / DSM 180 / NBRC 103801 / NCIMB 10441 / D) (Chromatium vinosum).